A 520-amino-acid chain; its full sequence is MNLKEEIESRKTFAIISHPDAGKTTLTEKLLYFSGAIREAGTVKGKKTGKFATSDWMKVEQERGISVTSSVMQFDYDDYKINILDTPGHEDFSEDTYRTLMAVDSAVMVIDCAKGIEPQTLKLFKVCKMRGIPIFTFINKLDRVGKEPFELLDEIEETLNIDTYPMNWPVGMGQNFFGIIDRHSKTIEPFRDEENLLHLNEDYELKEEHAIKNDSAFEQAIEEMMLVDEAGEAFDNEALLNGELTPVFFGSALANFGVQNFLNAYVDHAPMPNARQTKEEVDVSPFDTDFSGFIFKIQANMDPKHRDRIAFMRVVSGAFERGMDVTLQRTNKKQKITRSTSFMADDKETVNHAVAGDIIGLYDTGNYQIGDTLVGGKQKYSFQELPQFTPEIFMKVSAKNVMKQKHFHKGIEQLVQEGAIQYYKTLHTNQIILGAVGQLQFEVFEHRMNNEYNVDVVMEPVGRKIARWIENEEDIKDNMNTSRSILVKDRYDNYVFLFENEFATRWFEEKFSDIKLYSLL.

Positions 8–277 constitute a tr-type G domain; sequence ESRKTFAIIS…HAPMPNARQT (270 aa). Residues 17–24, 85–89, and 139–142 each bind GTP; these read SHPDAGKT, DTPGH, and NKLD.

The protein belongs to the TRAFAC class translation factor GTPase superfamily. Classic translation factor GTPase family. PrfC subfamily.

Its subcellular location is the cytoplasm. Functionally, increases the formation of ribosomal termination complexes and stimulates activities of RF-1 and RF-2. It binds guanine nucleotides and has strong preference for UGA stop codons. It may interact directly with the ribosome. The stimulation of RF-1 and RF-2 is significantly reduced by GTP and GDP, but not by GMP. The sequence is that of Peptide chain release factor 3 from Staphylococcus epidermidis (strain ATCC 35984 / DSM 28319 / BCRC 17069 / CCUG 31568 / BM 3577 / RP62A).